The primary structure comprises 318 residues: Acetyl-coenzyme A carboxylase carboxyl transferase subunit alpha (318 aa).

Positions Asp32–Glu293 constitute a CoA carboxyltransferase C-terminal domain.

It belongs to the AccA family. Acetyl-CoA carboxylase is a heterohexamer composed of biotin carboxyl carrier protein (AccB), biotin carboxylase (AccC) and two subunits each of ACCase subunit alpha (AccA) and ACCase subunit beta (AccD).

The protein resides in the cytoplasm. The catalysed reaction is N(6)-carboxybiotinyl-L-lysyl-[protein] + acetyl-CoA = N(6)-biotinyl-L-lysyl-[protein] + malonyl-CoA. It participates in lipid metabolism; malonyl-CoA biosynthesis; malonyl-CoA from acetyl-CoA: step 1/1. Component of the acetyl coenzyme A carboxylase (ACC) complex. First, biotin carboxylase catalyzes the carboxylation of biotin on its carrier protein (BCCP) and then the CO(2) group is transferred by the carboxyltransferase to acetyl-CoA to form malonyl-CoA. This chain is Acetyl-coenzyme A carboxylase carboxyl transferase subunit alpha, found in Syntrophomonas wolfei subsp. wolfei (strain DSM 2245B / Goettingen).